Reading from the N-terminus, the 72-residue chain is NAD(P)H-quinone oxidoreductase subunit O (72 aa).

The protein belongs to the complex I NdhO subunit family. As to quaternary structure, NDH-1 can be composed of about 15 different subunits; different subcomplexes with different compositions have been identified which probably have different functions.

It localises to the cellular thylakoid membrane. The enzyme catalyses a plastoquinone + NADH + (n+1) H(+)(in) = a plastoquinol + NAD(+) + n H(+)(out). The catalysed reaction is a plastoquinone + NADPH + (n+1) H(+)(in) = a plastoquinol + NADP(+) + n H(+)(out). Functionally, NDH-1 shuttles electrons from an unknown electron donor, via FMN and iron-sulfur (Fe-S) centers, to quinones in the respiratory and/or the photosynthetic chain. The immediate electron acceptor for the enzyme in this species is believed to be plastoquinone. Couples the redox reaction to proton translocation, and thus conserves the redox energy in a proton gradient. Cyanobacterial NDH-1 also plays a role in inorganic carbon-concentration. The chain is NAD(P)H-quinone oxidoreductase subunit O from Crocosphaera subtropica (strain ATCC 51142 / BH68) (Cyanothece sp. (strain ATCC 51142)).